The following is a 107-amino-acid chain: Iron-sulfur cluster assembly protein CyaY (107 aa).

This sequence belongs to the frataxin family.

Its function is as follows. Involved in iron-sulfur (Fe-S) cluster assembly. May act as a regulator of Fe-S biogenesis. The chain is Iron-sulfur cluster assembly protein CyaY from Neisseria meningitidis serogroup A / serotype 4A (strain DSM 15465 / Z2491).